Consider the following 496-residue polypeptide: Fibronectin type III and SPRY domain-containing protein 1 (496 aa).

Residues 4–99 (QKEALRKIIT…ALESSEELLE (96 aa)) are a coiled coil. The region spanning 105 to 162 (LLATDSKDFPQAAKQIKDGVTMAPAFRLSLKAKVSDNMSHLMVDFAQERRMLQALTFL) is the COS domain. The Fibronectin type-III domain occupies 164 to 268 (VPSAPVIDLT…EPVTLETPAF (105 aa)). The B30.2/SPRY domain maps to 268–477 (FMFRLDASTS…VTTGLQVPSS (210 aa)). The interval 301 to 336 (KAREKDGKGRTASPVNSPARGTPSPKRMPSGRGGRD) is disordered. Residues Arg-310 and Arg-320 each carry the omega-N-methylarginine modification.

As to quaternary structure, oligomerization is required for binding to microtubules.

Its subcellular location is the cytoplasm. The protein localises to the cytoskeleton. It localises to the microtubule organizing center. It is found in the centrosome. The protein resides in the nucleus. Its subcellular location is the cleavage furrow. In terms of biological role, may be involved in microtubule organization and stabilization. In Bos taurus (Bovine), this protein is Fibronectin type III and SPRY domain-containing protein 1 (FSD1).